The following is a 338-amino-acid chain: Nucleoid-associated protein VSAL_I1059 (338 aa).

The interval 319 to 338 is disordered; it reads KGTPPNLKDQLTRRLGSSES.

It belongs to the YejK family.

The protein resides in the cytoplasm. The protein localises to the nucleoid. The chain is Nucleoid-associated protein VSAL_I1059 from Aliivibrio salmonicida (strain LFI1238) (Vibrio salmonicida (strain LFI1238)).